The chain runs to 530 residues: UDP-glucuronosyltransferase 1A10 (530 aa).

Residues 1 to 25 form the signal peptide; it reads MARAGWTSPVPLCVCLLLTCGFAEA. N-linked (GlcNAc...) asparagine glycosylation is found at asparagine 71, asparagine 292, and asparagine 344. The chain crosses the membrane as a helical span at residues 488-504; that stretch reads VIGFLLAVVLTVAFITF.

The protein belongs to the UDP-glycosyltransferase family. In terms of assembly, homodimer. Homooligomer. Interacts with UGT1A1, UGT1A3, UGT1A4, UGT1A6, UGT1A7, UGT1A8 and UGT1A9 to form heterodimers. Isoform 1 interacts with isoform 2/i2 suggesting that oligomerization is involved in negative regulation of transferase activity by isoform 2. Isoform 1 also interacts with respective i2 isoforms of UGT1A1, UGT1A3, UGT1A4, UGT1A6, UGT1A7, UGT1A8 and UGT1A9. In terms of tissue distribution, liver and colon. Isoform 1 and isoform 2 are expressed in colon, esophagus and small intestine; isoform 2 but not isoform 1 is expressed in liver or kidney.

Its subcellular location is the endoplasmic reticulum membrane. The catalysed reaction is glucuronate acceptor + UDP-alpha-D-glucuronate = acceptor beta-D-glucuronoside + UDP + H(+). The enzyme catalyses 17beta-estradiol + UDP-alpha-D-glucuronate = 17beta-estradiol 3-O-(beta-D-glucuronate) + UDP + H(+). It carries out the reaction 17beta-estradiol + UDP-alpha-D-glucuronate = 17beta-estradiol 17-O-(beta-D-glucuronate) + UDP + H(+). It catalyses the reaction 17alpha-estradiol + UDP-alpha-D-glucuronate = 17alpha-estradiol 3-O-(beta-D-glucuronate) + UDP + H(+). The catalysed reaction is 16alpha,17beta-estriol + UDP-alpha-D-glucuronate = 16alpha,17beta-estriol 3-O-(beta-D-glucuronate) + UDP + H(+). The enzyme catalyses 16beta,17beta-estriol + UDP-alpha-D-glucuronate = 16beta,17beta-estriol 3-O-(beta-D-glucuronate) + UDP + H(+). It carries out the reaction 16alpha,17alpha-estriol + UDP-alpha-D-glucuronate = 16alpha,17alpha-estriol 3-O-(beta-D-glucuronate) + UDP + H(+). It catalyses the reaction 16alpha-hydroxyestrone + UDP-alpha-D-glucuronate = 16alpha-hydroxyestrone 3-O-(beta-D-glucuronate) + UDP + H(+). The catalysed reaction is estrone + UDP-alpha-D-glucuronate = estrone 3-O-(beta-D-glucuronate) + UDP + H(+). The enzyme catalyses prunetin + UDP-alpha-D-glucuronate = prunetin-4'-O-beta-D-glucuronide + UDP. It carries out the reaction (5Z,8Z,11Z,14Z)-eicosatetraenoate + UDP-alpha-D-glucuronate = O-[(5Z),(8Z),(11Z),(14Z)-eicosatetraenoyl]-beta-D-glucuronate + UDP. It catalyses the reaction 15-hydroxy-(5Z,8Z,11Z,13E)-eicosatetraenoate + UDP-alpha-D-glucuronate = 15-O-(beta-D-glucuronosyl)-(5Z,8Z,11Z,14Z)-eicosatetraenoate + UDP + H(+). The catalysed reaction is prostaglandin B1 + UDP-alpha-D-glucuronate = 15-O-(beta-D-glucuronosyl)-prostaglandin B1 + UDP + H(+). The enzyme catalyses (E)-ferulate + UDP-alpha-D-glucuronate = (E)-4-O-(beta-D-glucuronosyl)-ferulate + UDP + H(+). It carries out the reaction (E)-ferulate + UDP-alpha-D-glucuronate = (E)-ferulic acid beta-D-glucuronate ester + UDP. It catalyses the reaction losartan + UDP-alpha-D-glucuronate = losartan-2-N-beta-D-glucuronide + UDP. The catalysed reaction is candesartan + UDP-alpha-D-glucuronate = candesartan O-beta-D-glucuronoside + UDP. The enzyme catalyses candesartan + UDP-alpha-D-glucuronate = candesartan-2-N-beta-D-glucuronide + UDP. It carries out the reaction zolasartan + UDP-alpha-D-glucuronate = zolarsartan-1-N-beta-D-glucuronide + UDP. UDP-glucuronosyltransferase (UGT) that catalyzes phase II biotransformation reactions in which lipophilic substrates are conjugated with glucuronic acid to increase the metabolite's water solubility, thereby facilitating excretion into either the urine or bile. Essential for the elimination and detoxification of drugs, xenobiotics and endogenous compounds. Catalyzes the glucuronidation of endogenous estrogen hormones such as estradiol, estrone and estriol. Involved in the glucuronidation of arachidonic acid (AA) and AA-derived eicosanoids including 15-HETE and PGB1. Involved in the glucuronidation of the phytochemical ferulic acid at the phenolic or the carboxylic acid group. Also catalyzes the glucuronidation of the isoflavones genistein, daidzein, glycitein, formononetin, biochanin A and prunetin, which are phytoestrogens with anticancer and cardiovascular properties. Involved in the glucuronidation of the AGTR1 angiotensin receptor antagonist losartan, caderastan and zolarsatan, drugs which can inhibit the effect of angiotensin II. In terms of biological role, lacks UGT glucuronidation activity but acts as a negative regulator of isoform 1. The sequence is that of UDP-glucuronosyltransferase 1A10 from Homo sapiens (Human).